The primary structure comprises 504 residues: Anaerobic nitric oxide reductase transcription regulator NorR (504 aa).

D57 bears the 4-aspartylphosphate mark. The Sigma-54 factor interaction domain occupies 187–416 (MIGLSPGMTQ…LEHAIHRAVV (230 aa)). ATP is bound by residues 215–222 (GETGTGKE) and 278–287 (ADNGTLFLDE). Positions 479-498 (WAACARMLETDVANLHRLAK) form a DNA-binding region, H-T-H motif.

It functions in the pathway nitrogen metabolism; nitric oxide reduction. Functionally, required for the expression of anaerobic nitric oxide (NO) reductase, acts as a transcriptional activator for at least the norVW operon. Activation also requires sigma-54. In Shigella sonnei (strain Ss046), this protein is Anaerobic nitric oxide reductase transcription regulator NorR.